Reading from the N-terminus, the 288-residue chain is MNPVFLKIGPIELHYYGLMYAIAFFVGISLGKKIAKERNFDLDLVENYAFVAIISGLIGGRLYYILFNLPYYLQNPFEILAVWHGGMAIHGGILGGIAGTLIFAKIKKINPLILGDFAAGPFILGQAIGRIGNFMNGEVHGVPTFTPFSVIFNVKPKFYEWYTYYQSLSISDKANYPDLVPWGVVFPTSSPAGSEFPNLALHPAMLYELILNLIGFFIIWFILRKKENKASGYMWWWYIIIYSINRIIVSFFRVEDLMFFNFRAPHVISIILIAVSIFFLKKDNKKVF.

The next 4 membrane-spanning stretches (helical) occupy residues 8-28, 49-69, 79-99, and 109-129; these read IGPI…FVGI, AFVA…LFNL, ILAV…GIAG, and INPL…QAIG. R130 provides a ligand contact to a 1,2-diacyl-sn-glycero-3-phospho-(1'-sn-glycerol). 3 consecutive transmembrane segments (helical) span residues 203-223, 232-252, and 259-279; these read PAML…WFIL, GYMW…VSFF, and FFNF…SIFF.

Belongs to the Lgt family.

The protein localises to the cell inner membrane. It carries out the reaction L-cysteinyl-[prolipoprotein] + a 1,2-diacyl-sn-glycero-3-phospho-(1'-sn-glycerol) = an S-1,2-diacyl-sn-glyceryl-L-cysteinyl-[prolipoprotein] + sn-glycerol 1-phosphate + H(+). It participates in protein modification; lipoprotein biosynthesis (diacylglyceryl transfer). Its function is as follows. Catalyzes the transfer of the diacylglyceryl group from phosphatidylglycerol to the sulfhydryl group of the N-terminal cysteine of a prolipoprotein, the first step in the formation of mature lipoproteins. The polypeptide is Phosphatidylglycerol--prolipoprotein diacylglyceryl transferase (Fusobacterium nucleatum subsp. nucleatum (strain ATCC 25586 / DSM 15643 / BCRC 10681 / CIP 101130 / JCM 8532 / KCTC 2640 / LMG 13131 / VPI 4355)).